A 358-amino-acid chain; its full sequence is tRNA-specific 2-thiouridylase MnmA (358 aa).

Residues 22 to 29 (LVSGGIDS) and Phe-48 contribute to the ATP site. Catalysis depends on Cys-105, which acts as the Nucleophile. Residues Cys-105 and Cys-201 are joined by a disulfide bond. Residue Gly-129 participates in ATP binding. Residues 151-153 (KEQ) form an interaction with tRNA region. The active-site Cysteine persulfide intermediate is Cys-201. Residues 306-307 (RY) are interaction with tRNA.

It belongs to the MnmA/TRMU family.

The protein localises to the cytoplasm. The enzyme catalyses S-sulfanyl-L-cysteinyl-[protein] + uridine(34) in tRNA + AH2 + ATP = 2-thiouridine(34) in tRNA + L-cysteinyl-[protein] + A + AMP + diphosphate + H(+). Catalyzes the 2-thiolation of uridine at the wobble position (U34) of tRNA, leading to the formation of s(2)U34. This Desulfosudis oleivorans (strain DSM 6200 / JCM 39069 / Hxd3) (Desulfococcus oleovorans) protein is tRNA-specific 2-thiouridylase MnmA.